Here is a 190-residue protein sequence, read N- to C-terminus: dCTP deaminase, dUMP-forming (190 aa).

DCTP is bound by residues 101-106 (KSSLGR), D119, 127-129 (TLE), Q148, Y162, and Q174. Residue E129 is the Proton donor/acceptor of the active site. The interval 162–184 (YGSAKVGSKYQGQRGPTPSRSYQ) is disordered. Positions 171 to 184 (YQGQRGPTPSRSYQ) are enriched in polar residues.

Belongs to the dCTP deaminase family. In terms of assembly, homotrimer.

The enzyme catalyses dCTP + 2 H2O = dUMP + NH4(+) + diphosphate. The protein operates within pyrimidine metabolism; dUMP biosynthesis; dUMP from dCTP: step 1/1. In terms of biological role, bifunctional enzyme that catalyzes both the deamination of dCTP to dUTP and the hydrolysis of dUTP to dUMP without releasing the toxic dUTP intermediate. This Mycobacterium sp. (strain JLS) protein is dCTP deaminase, dUMP-forming.